Reading from the N-terminus, the 372-residue chain is Cytochrome b (372 aa).

4 helical membrane-spanning segments follow: residues 25–45 (FGSMLLTCSALQIMTGFFLSM), 69–90 (WMMQNLHAIGASMFFICVYIHV), 105–125 (WLSGTTLLIMLMATAFFGYVL), and 170–190 (FFALHFILPFGIISLSSLHIM). The heme b site is built by histidine 75 and histidine 89. Heme b contacts are provided by histidine 174 and histidine 188. Histidine 193 lines the a ubiquinone pocket. The next 4 helical transmembrane spans lie at 218–238 (YKDLFMISSMIMIMLLTISFI), 280–300 (LGGALALAMSIMILLTVPFTH), 312–332 (FMQLMFWTLVATFMIITWTAT), and 339–358 (YTMISQVTSSLYFMFFMSNP).

It belongs to the cytochrome b family. As to quaternary structure, the cytochrome bc1 complex contains 3 respiratory subunits (MT-CYB, CYC1 and UQCRFS1), 2 core proteins (UQCRC1 and UQCRC2) and probably 6 low-molecular weight proteins. The cofactor is heme b.

Its subcellular location is the mitochondrion inner membrane. Component of the ubiquinol-cytochrome c reductase complex (complex III or cytochrome b-c1 complex) that is part of the mitochondrial respiratory chain. The b-c1 complex mediates electron transfer from ubiquinol to cytochrome c. Contributes to the generation of a proton gradient across the mitochondrial membrane that is then used for ATP synthesis. In Acrantophis madagascariensis (Madagascar ground boa), this protein is Cytochrome b (MT-CYB).